We begin with the raw amino-acid sequence, 119 residues long: Protein phosphatase EYA3 (119 aa).

It belongs to the HAD-like hydrolase superfamily. EYA family. Requires Mg(2+) as cofactor.

Its subcellular location is the cytoplasm. The protein resides in the nucleus. It catalyses the reaction O-phospho-L-tyrosyl-[protein] + H2O = L-tyrosyl-[protein] + phosphate. In terms of biological role, tyrosine phosphatase that specifically dephosphorylates 'Tyr-142' of histone H2AX (H2AXY142ph). 'Tyr-142' phosphorylation of histone H2AX plays a central role in DNA repair and acts as a mark that distinguishes between apoptotic and repair responses to genotoxic stress. Promotes efficient DNA repair by dephosphorylating H2AX, promoting the recruitment of DNA repair complexes containing MDC1. Its function as histone phosphatase probably explains its role in transcription regulation during organogenesis. May be involved in development of the eye. In Gallus gallus (Chicken), this protein is Protein phosphatase EYA3 (EYA3).